Reading from the N-terminus, the 62-residue chain is UPF0291 protein CLM_2971 (62 aa).

The protein belongs to the UPF0291 family.

It is found in the cytoplasm. This Clostridium botulinum (strain Kyoto / Type A2) protein is UPF0291 protein CLM_2971.